A 183-amino-acid polypeptide reads, in one-letter code: Capsid protein (183 aa).

Positions 143–183 are disordered; sequence LPETAVVRRRGRSPRRRTPSPRRRRSQSPRRRRSQSPASQC. A compositionally biased stretch (basic residues) spans 149-176; that stretch reads VRRRGRSPRRRTPSPRRRRSQSPRRRRS. Ser155, Ser162, and Ser170 each carry phosphoserine; by host. The stretch at 155–161 is one 1; half-length repeat; that stretch reads SPRRRTP. The tract at residues 155-177 is 3 X 8 AA repeats of S-P-R-R-R-[PR]-S-Q; it reads SPRRRTPSPRRRRSQSPRRRRSQ. A Bipartite nuclear localization signal motif is present at residues 158 to 175; it reads RRTPSPRRRRSQSPRRRR. Repeat copies occupy residues 162 to 169 and 170 to 177. The RNA binding stretch occupies residues 177–183; the sequence is QSPASQC.

The protein belongs to the orthohepadnavirus core antigen family. In terms of assembly, homodimerizes, then multimerizes. Interacts with cytosol exposed regions of viral L glycoprotein present in the reticulum-to-Golgi compartment. Interacts with human FLNB. Phosphorylated form interacts with host importin alpha; this interaction depends on the exposure of the NLS, which itself depends upon genome maturation and/or phosphorylation of the capsid protein. Interacts with host NUP153. In terms of processing, phosphorylated by host SRPK1, SRPK2, and maybe protein kinase C or GAPDH. Phosphorylation is critical for pregenomic RNA packaging. Protein kinase C phosphorylation is stimulated by HBx protein and may play a role in transport of the viral genome to the nucleus at the late step during the viral replication cycle.

It is found in the virion. It localises to the host cytoplasm. Self assembles to form an icosahedral capsid. Most capsids appear to be large particles with an icosahedral symmetry of T=4 and consist of 240 copies of capsid protein, though a fraction forms smaller T=3 particles consisting of 180 capsid proteins. Entering capsids are transported along microtubules to the nucleus. Phosphorylation of the capsid is thought to induce exposure of nuclear localization signal in the C-terminal portion of the capsid protein that allows binding to the nuclear pore complex via the importin (karyopherin-) alpha and beta. Capsids are imported in intact form through the nuclear pore into the nuclear basket, where it probably binds NUP153. Only capsids that contain the mature viral genome can release the viral DNA and capsid protein into the nucleoplasm. Immature capsids get stuck in the basket. Capsids encapsulate the pre-genomic RNA and the P protein. Pre-genomic RNA is reverse-transcribed into DNA while the capsid is still in the cytoplasm. The capsid can then either be directed to the nucleus, providing more genomes for transcription, or bud through the endoplasmic reticulum to provide new virions. The chain is Capsid protein from Gorilla gorilla (western gorilla).